A 155-amino-acid chain; its full sequence is Small ribosomal subunit protein uS13 (155 aa).

A compositionally biased stretch (basic residues) spans 135–145; the sequence is QHTKTTGRRGR. The disordered stretch occupies residues 135–155; the sequence is QHTKTTGRRGRTVGVSRTKGA. Low complexity predominate over residues 146-155; it reads TVGVSRTKGA.

Belongs to the universal ribosomal protein uS13 family. As to quaternary structure, component of the small ribosomal subunit.

The protein localises to the cytoplasm. Its function is as follows. Component of the small ribosomal subunit. The ribosome is a large ribonucleoprotein complex responsible for the synthesis of proteins in the cell. The sequence is that of Small ribosomal subunit protein uS13 (RPS18) from Entamoeba histolytica (strain ATCC 30459 / HM-1:IMSS / ABRM).